Consider the following 275-residue polypeptide: Putative methylglyoxal reductase DkgA (275 aa).

Tyrosine 51 serves as the catalytic Proton donor. Residue histidine 107 participates in substrate binding. 187-241 contributes to the NADP(+) binding site; the sequence is SPLAQGGEGVFDQKVIRELADKYGKTPAQIVIRWHLDCGLVVIPKSVTPSRIAEN.

This sequence belongs to the aldo/keto reductase family. Monomer.

The protein localises to the cytoplasm. The enzyme catalyses hydroxyacetone + NADP(+) = methylglyoxal + NADPH + H(+). Aldo-keto reductase that significantly contributes to cellular methylglyoxal detoxification by catalyzing the NADPH-dependent conversion of methylglyoxal to acetol. This chain is Putative methylglyoxal reductase DkgA, found in Salmonella typhi.